A 105-amino-acid chain; its full sequence is Large ribosomal subunit protein uL24 (105 aa).

It belongs to the universal ribosomal protein uL24 family. In terms of assembly, part of the 50S ribosomal subunit.

In terms of biological role, one of two assembly initiator proteins, it binds directly to the 5'-end of the 23S rRNA, where it nucleates assembly of the 50S subunit. Its function is as follows. One of the proteins that surrounds the polypeptide exit tunnel on the outside of the subunit. The polypeptide is Large ribosomal subunit protein uL24 (Xylella fastidiosa (strain M23)).